Reading from the N-terminus, the 333-residue chain is Tetraacyldisaccharide 4'-kinase (333 aa).

60–67 (TVGGTGKT) contacts ATP.

This sequence belongs to the LpxK family.

It catalyses the reaction a lipid A disaccharide + ATP = a lipid IVA + ADP + H(+). The protein operates within glycolipid biosynthesis; lipid IV(A) biosynthesis; lipid IV(A) from (3R)-3-hydroxytetradecanoyl-[acyl-carrier-protein] and UDP-N-acetyl-alpha-D-glucosamine: step 6/6. Functionally, transfers the gamma-phosphate of ATP to the 4'-position of a tetraacyldisaccharide 1-phosphate intermediate (termed DS-1-P) to form tetraacyldisaccharide 1,4'-bis-phosphate (lipid IVA). In Pseudomonas putida (strain ATCC 700007 / DSM 6899 / JCM 31910 / BCRC 17059 / LMG 24140 / F1), this protein is Tetraacyldisaccharide 4'-kinase.